The following is a 233-amino-acid chain: 6-carboxyhexanoate--CoA ligase (233 aa).

The protein belongs to the BioW family. In terms of assembly, homodimer. Mg(2+) serves as cofactor.

The catalysed reaction is heptanedioate + ATP + CoA = 6-carboxyhexanoyl-CoA + AMP + diphosphate. It participates in metabolic intermediate metabolism; pimeloyl-CoA biosynthesis; pimeloyl-CoA from pimelate: step 1/1. Functionally, catalyzes the transformation of pimelate into pimeloyl-CoA with concomitant hydrolysis of ATP to AMP. The chain is 6-carboxyhexanoate--CoA ligase from Methanocaldococcus sp. (strain FS406-22).